We begin with the raw amino-acid sequence, 119 residues long: Protein Wnt-4 (119 aa).

The O-palmitoleoyl serine; by PORCN moiety is linked to residue S1. Disulfide bonds link C69–C100 and C85–C95. N86 is a glycosylation site (N-linked (GlcNAc...) asparagine).

Belongs to the Wnt family. In terms of processing, palmitoleoylation is required for efficient binding to frizzled receptors. Depalmitoleoylation leads to Wnt signaling pathway inhibition.

It is found in the secreted. The protein resides in the extracellular space. Its subcellular location is the extracellular matrix. Its function is as follows. Ligand for members of the frizzled family of seven transmembrane receptors. Plays an important role in embryonic development. In Eptatretus stoutii (Pacific hagfish), this protein is Protein Wnt-4 (WNT-4).